A 152-amino-acid chain; its full sequence is Regulatory protein RecX (152 aa).

The protein belongs to the RecX family.

The protein localises to the cytoplasm. Its function is as follows. Modulates RecA activity. In Haemophilus influenzae (strain PittEE), this protein is Regulatory protein RecX.